We begin with the raw amino-acid sequence, 208 residues long: Glutathione S-transferase 2 (208 aa).

Positions 1 to 78 (MSYKLTYFSI…HLARKYNLNG (78 aa)) constitute a GST N-terminal domain. Residues Tyr7, Lys42, 49-50 (QL), and 62-63 (QS) contribute to the glutathione site. The GST C-terminal domain maps to 80-200 (NEMETTYIDM…YCEKRDAAKV (121 aa)).

It belongs to the GST superfamily. Pi family. Homodimer. As to expression, hypodermis, wall of the seminal receptacle and spermatozoa of adult worms.

It carries out the reaction RX + glutathione = an S-substituted glutathione + a halide anion + H(+). Functionally, appears to play a central role in the parasite detoxification system. This chain is Glutathione S-transferase 2 (GST2), found in Onchocerca volvulus.